We begin with the raw amino-acid sequence, 396 residues long: MANDYLFTSESVSEGHPDKVADQISDAILDAILAQDKYSRVAAETLCNTGLVVLAGEITTTANVDYIQVARNTIKRIGYDNTDYGIDYRGCAVLVAYDKQSPDIAQGVDRAHDNNLDQGAGDQGLMFGYACEETPELMPLPIHLSHRLVERQANLRRDGRLPWLRPDAKSQVTVRYVDGKPHAIDTVVLSTQHSPDIDLGTLREAVIEEVIKPTLPAELIKGDIKFLVNPTGRFVIGGPQGDCGLTGRKIIVDTYGGAAPHGGGAFSGKDPSKVDRSAAYAGRYVAKNIVAAGLASRCLIQVSYAIGVAQPTSVMVNTFGTGRVSDATITRLVQEHFDLRPKGIIQMLDLLRPIYEKSAAYGHFGREEPEFTWESTDKALALAEAAGTEPVAALAE.

Residue His-16 participates in ATP binding. Asp-18 contributes to the Mg(2+) binding site. Glu-44 serves as a coordination point for K(+). Residues Glu-57 and Gln-100 each contribute to the L-methionine site. Positions 100 to 110 (QSPDIAQGVDR) are flexible loop. ATP is bound by residues 167-169 (DAK), 233-234 (RF), Asp-242, 248-249 (RK), Ala-265, and Lys-269. Residue Asp-242 coordinates L-methionine. An L-methionine-binding site is contributed by Lys-273.

The protein belongs to the AdoMet synthase family. In terms of assembly, homotetramer; dimer of dimers. Mg(2+) is required as a cofactor. K(+) serves as cofactor.

It localises to the cytoplasm. The enzyme catalyses L-methionine + ATP + H2O = S-adenosyl-L-methionine + phosphate + diphosphate. It participates in amino-acid biosynthesis; S-adenosyl-L-methionine biosynthesis; S-adenosyl-L-methionine from L-methionine: step 1/1. In terms of biological role, catalyzes the formation of S-adenosylmethionine (AdoMet) from methionine and ATP. The overall synthetic reaction is composed of two sequential steps, AdoMet formation and the subsequent tripolyphosphate hydrolysis which occurs prior to release of AdoMet from the enzyme. The sequence is that of S-adenosylmethionine synthase from Paraburkholderia phytofirmans (strain DSM 17436 / LMG 22146 / PsJN) (Burkholderia phytofirmans).